The following is a 503-amino-acid chain: Apolipoprotein N-acyltransferase (503 aa).

7 helical membrane passes run 13-32, 34-54, 63-83, 102-122, 124-144, 173-193, and 203-223; these read RWRG…LTAL, MPGF…LYAV, AFLS…WVLP, IVVF…FGFL, YFAP…YTIF, IVSI…NVLF, and LLIF…VHLL. One can recognise a CN hydrolase domain in the interval 231-460; the sequence is FKVVALQPNV…RLAGEFHIKA (230 aa). Glutamate 273 serves as the catalytic Proton acceptor. Residue lysine 321 is part of the active site. Cysteine 371 serves as the catalytic Nucleophile. A helical transmembrane segment spans residues 468 to 488; it reads VRYGDWFFYLSVILAVVSVFI.

This sequence belongs to the CN hydrolase family. Apolipoprotein N-acyltransferase subfamily.

Its subcellular location is the cell inner membrane. It carries out the reaction N-terminal S-1,2-diacyl-sn-glyceryl-L-cysteinyl-[lipoprotein] + a glycerophospholipid = N-acyl-S-1,2-diacyl-sn-glyceryl-L-cysteinyl-[lipoprotein] + a 2-acyl-sn-glycero-3-phospholipid + H(+). It participates in protein modification; lipoprotein biosynthesis (N-acyl transfer). Functionally, catalyzes the phospholipid dependent N-acylation of the N-terminal cysteine of apolipoprotein, the last step in lipoprotein maturation. In Thermotoga maritima (strain ATCC 43589 / DSM 3109 / JCM 10099 / NBRC 100826 / MSB8), this protein is Apolipoprotein N-acyltransferase.